The sequence spans 1271 residues: Protein flightless-1 homolog (1271 aa).

An N-acetylmethionine modification is found at M1. An interaction with LRRFIP1 and LRRFIP2 region spans residues 1-427; that stretch reads MEATGVLPFV…SGSKDPLARK (427 aa). LRR repeat units follow at residues 7–32, 33–55, 56–78, 80–103, 104–126, 127–149, 150–173, 175–196, 197–222, 223–245, 247–268, 269–291, 293–316, 317–339, 340–363, and 365–385; these read LPFV…VKAM, TSLR…LAAL, QKLE…LSSL, SLRA…IFKL, DDLS…LENA, KNML…LFIN, LTDL…MRRL, HLQT…QLPA, MMAL…LEGL, SNLS…LYTL, SLRR…IDQW, VHLE…ICKL, KLKK…IGKL, TSLE…LCRC, PKLK…HFLT, and IQVL…PADR. K21 is subject to N6-acetyllysine. S406 is modified (phosphoserine). S436 carries the phosphoserine; by SGK3 modification. An interaction with ACTL6A region spans residues 495–827; it reads VGQLPGLTIW…VVSRSLEGTE (333 aa). Gelsolin-like repeat units follow at residues 509 to 591, 629 to 703, and 759 to 831; these read FVPV…EEFL, NIKL…PGFW, and LMPG…AQVF. S860 carries the phosphoserine modification. The disordered stretch occupies residues 951 to 977; the sequence is KTEDKEGKASAEAREGEEAAAEAEEKQ. The span at 952-967 shows a compositional bias: basic and acidic residues; the sequence is TEDKEGKASAEAREGE. Acidic residues predominate over residues 968 to 977; the sequence is EAAAEAEEKQ. One copy of the Gelsolin-like 4 repeat lies at 1183–1256; sequence KCSDFCQDDL…VRKGNEQRAF (74 aa).

As to quaternary structure, interacts with actin, ACTL6A and NCOA2. Interacts with CARM1. Interacts with LRRFIP1, LRRFIP2 and MYD88. Upon LPS stimulation, LRRFIP2 competes for MYD88-binding; LRRFIP1 constitutively blocks the interaction with MyD88, even in the absence of LPS. Interacts with the nuclear receptors ESR1 and THRB. Interacts with SGK3. Interacts (via the gelsolin-like region) with TMOD1 and TMOD3. Interacts with LMOD2, VCL, GSN and DES. As to expression, expressed in blastocyst.

Its subcellular location is the nucleus. The protein resides in the cytoplasm. It localises to the cytoskeleton. It is found in the microtubule organizing center. The protein localises to the centrosome. Its subcellular location is the cell junction. The protein resides in the focal adhesion. It localises to the cell projection. It is found in the podosome. Its function is as follows. Is a regulator of actin polymerization, required for proper myofibril organization and regulation of the length of sarcomeric thin filaments. It also plays a role in the assembly of cardiomyocyte cell adhesion complexes. Regulates cytoskeletal rearrangements involved in cytokinesis and cell migration, by inhibiting Rac1-dependent paxillin phosphorylation. May play a role as coactivator in transcriptional activation by hormone-activated nuclear receptors (NR) and acts in cooperation with NCOA2 and CARM1. Involved in estrogen hormone signaling. This chain is Protein flightless-1 homolog (Flii), found in Mus musculus (Mouse).